Reading from the N-terminus, the 391-residue chain is Pyruvate dehydrogenase E1 component subunit alpha, mitochondrial (391 aa).

The N-terminal 26 residues, 1 to 26 (MALSTSRAINHIMKPLSAAVCATRRL), are a transit peptide targeting the mitochondrion. Positions 92, 118, 119, 167, 169, 198, 199, 200, 227, and 229 each coordinate pyruvate. Thiamine diphosphate is bound by residues Tyr-118, Arg-119, Gly-167, Val-169, Asp-198, Gly-199, Ala-200, and Asn-227. Residue Asp-198 coordinates Mg(2+). Positions 227 and 229 each coordinate Mg(2+). His-293 contacts thiamine diphosphate. Residues 294–313 (SMSDPGSTYRTRDEISGVRQ) form a disordered region. The span at 303 to 313 (RTRDEISGVRQ) shows a compositional bias: basic and acidic residues.

In terms of assembly, tetramer of 2 alpha and 2 beta subunits. Thiamine diphosphate is required as a cofactor. Mg(2+) serves as cofactor.

It localises to the mitochondrion matrix. The catalysed reaction is N(6)-[(R)-lipoyl]-L-lysyl-[protein] + pyruvate + H(+) = N(6)-[(R)-S(8)-acetyldihydrolipoyl]-L-lysyl-[protein] + CO2. With respect to regulation, E1 activity is regulated by phosphorylation (inactivation) and dephosphorylation (activation) of the alpha subunit. Its function is as follows. The pyruvate dehydrogenase complex catalyzes the overall conversion of pyruvate to acetyl-CoA and CO(2). It contains multiple copies of three enzymatic components: pyruvate dehydrogenase (E1), dihydrolipoamide acetyltransferase (E2) and lipoamide dehydrogenase (E3). This chain is Pyruvate dehydrogenase E1 component subunit alpha, mitochondrial, found in Solanum tuberosum (Potato).